The chain runs to 435 residues: Ribulose bisphosphate carboxylase large chain (435 aa).

2 residues coordinate substrate: Asn104 and Thr154. The Proton acceptor role is filled by Lys156. Lys158 contributes to the substrate binding site. Mg(2+)-binding residues include Lys182, Asp184, and Glu185. The residue at position 182 (Lys182) is an N6-carboxylysine. The Proton acceptor role is filled by His275. 3 residues coordinate substrate: Arg276, His308, and Ser360.

The protein belongs to the RuBisCO large chain family. Type I subfamily. Heterohexadecamer of 8 large chains and 8 small chains. Mg(2+) serves as cofactor.

Its subcellular location is the plastid. The protein resides in the chloroplast. The enzyme catalyses 2 (2R)-3-phosphoglycerate + 2 H(+) = D-ribulose 1,5-bisphosphate + CO2 + H2O. It carries out the reaction D-ribulose 1,5-bisphosphate + O2 = 2-phosphoglycolate + (2R)-3-phosphoglycerate + 2 H(+). In terms of biological role, ruBisCO catalyzes two reactions: the carboxylation of D-ribulose 1,5-bisphosphate, the primary event in carbon dioxide fixation, as well as the oxidative fragmentation of the pentose substrate in the photorespiration process. Both reactions occur simultaneously and in competition at the same active site. In Euglena pisciformis, this protein is Ribulose bisphosphate carboxylase large chain.